Here is a 431-residue protein sequence, read N- to C-terminus: MRALLARLLLCVLVVSDSKGSNELHQVPSNCDCLNGGTCVSNKYFSNIHWCNCPKKFGGQHCEIDKSKTCYEGNGHFYRGKASTDTMGRPCLAWNSATVLQQTYHAHRSDALQLGLGKHNYCRNPDNRWRPWCYVQVGLKPLVQECMVHDCADGKKPSSPPEELKFQCGQKTLRPRFKIVGGEFTTIENQPWFAAIYRRHRGGSVTYVCGGSLISPCWVVSATHCFIDYPKKEDYIVYLGRSRLNSHTQGEMKFEVENLILHKDYSADTLAHHNDIALLKIHSKEGRCAQPSRTIQTICLPSMYNDPPFGTSCEITGFGKENSTDYLYPEQLKMTVVKLISHRECQQPHYYGSEVTTKMLCAADPQWKTDSCQGDSGGPLVCSLQGRMTLTGIVSWGRGCALKDKPGVYTRVSYFLPWIRSHTKEENGLAL.

Residues 1-20 form the signal peptide; sequence MRALLARLLLCVLVVSDSKG. Residues 27–63 enclose the EGF-like domain; the sequence is VPSNCDCLNGGTCVSNKYFSNIHWCNCPKKFGGQHCE. 6 cysteine pairs are disulfide-bonded: Cys31-Cys39, Cys33-Cys51, Cys53-Cys62, Cys70-Cys151, Cys91-Cys133, and Cys122-Cys146. The binds urokinase plasminogen activator surface receptor stretch occupies residues 34–57; that stretch reads LNGGTCVSNKYFSNIHWCNCPKKF. The Kringle domain occupies 69-151; it reads TCYEGNGHFY…LVQECMVHDC (83 aa). A connecting peptide region spans residues 152-178; sequence ADGKKPSSPPEELKFQCGQKTLRPRFK. Ser158 bears the Phosphoserine mark. 6 cysteine pairs are disulfide-bonded: Cys168-Cys299, Cys209-Cys225, Cys217-Cys288, Cys313-Cys382, Cys345-Cys361, and Cys372-Cys400. The 246-residue stretch at 179–424 folds into the Peptidase S1 domain; sequence IVGGEFTTIE…FLPWIRSHTK (246 aa). Residues His224 and Asp275 each act as charge relay system in the active site. Asn322 is a glycosylation site (N-linked (GlcNAc...) asparagine). The residue at position 323 (Ser323) is a Phosphoserine. Ser376 serves as the catalytic Charge relay system.

Belongs to the peptidase S1 family. Found in high and low molecular mass forms. Each consists of two chains, A and B. The high molecular mass form contains a long chain A which is cleaved to yield a short chain A. Forms heterodimer with SERPINA5. Binds LRP1B; binding is followed by internalization and degradation. Interacts with MRC2. Interacts with PLAUR. In complex with SERPINE1, interacts with PLAUR/uPAR. Interacts with SORL1 and LRP1, either alone or in complex with SERPINE1; these interactions are abolished in the presence of LRPAP1/RAP. The ternary complex composed of PLAUR-PLAU-PAI1 also interacts with SORLA. In terms of processing, phosphorylation of Ser-158 and Ser-323 abolishes proadhesive ability but does not interfere with receptor binding. Post-translationally, produced as an inactive single-chain protein (pro-uPA or sc-uPA), is processed into the active disulfide-linked two-chain form of PLAU/uPA by a proteolytic event mediated, at least, by TMPRSS4.

Its subcellular location is the secreted. The enzyme catalyses Specific cleavage of Arg-|-Val bond in plasminogen to form plasmin.. Inhibited by SERPINA5. Inhibited by SERPINE1. Specifically cleaves the zymogen plasminogen to form the active enzyme plasmin. The polypeptide is Urokinase-type plasminogen activator (PLAU) (Pongo abelii (Sumatran orangutan)).